A 167-amino-acid chain; its full sequence is IAGCQNVVLCSPPPIADEILYAAQLCGVQEIFNVGGAQAIAALAFGSESVPKVDKIFGPGNAFVTEAKRQVSQRLDGAAIDMPAGPSEVLVIADSGATPDFVASDLLSQAEHGPDSQVILLTPDADIARKVAEAVERQLAELPRADTARQALSASRLIVTKDLAQCV.

Residues glutamine 109 and histidine 112 each contribute to the Zn(2+) site.

The protein belongs to the histidinol dehydrogenase family. Homodimer. Requires Zn(2+) as cofactor.

The catalysed reaction is L-histidinol + 2 NAD(+) + H2O = L-histidine + 2 NADH + 3 H(+). Its pathway is amino-acid biosynthesis; L-histidine biosynthesis; L-histidine from 5-phospho-alpha-D-ribose 1-diphosphate: step 9/9. Its function is as follows. Catalyzes the sequential NAD-dependent oxidations of L-histidinol to L-histidinaldehyde and then to L-histidine. In Salmonella enteritidis, this protein is Histidinol dehydrogenase (hisD).